Consider the following 347-residue polypeptide: MRIEQELKLGFKDVLFRPKRSTLKSRSQVNLTREFTFKHSGRQWSGVPVIAANMDSVGSFAMAKALAEHGVMTAVHKHYTVADWAEFVKSADKATLNNVMVSTGTSEADFQKTKDVMALSDELIFICIDIANGYSEHLVEYVQRVRAAFPDKVISAGNVVTGDMVEELILAGADIVKVGIGPGSVCTTRVKTGVGYPQLSAIIECADAAHGLGGRIIGDGGCTCPGDVAKAFGGGADFVMLGGMLAGHEEAGGELIVKDGETFMKFYGMSSKSAMDKHSGGVAGYRAAEGKTVLLPYRGSVHGTIQDILGGVRSTCTYVGAAELRELTKRTTFIRVQEQENNVYGRE.

108-131 contributes to the NADP(+) binding site; it reads ADFQKTKDVMALSDELIFICIDIA. 2 residues coordinate K(+): Gly181 and Gly183. Cys186 serves as the catalytic Thioimidate intermediate. NADP(+) is bound at residue 216–239; sequence IIGDGGCTCPGDVAKAFGGGADFV.

This sequence belongs to the IMPDH/GMPR family. GuaC type 1 subfamily. As to quaternary structure, homotetramer.

The enzyme catalyses IMP + NH4(+) + NADP(+) = GMP + NADPH + 2 H(+). Its function is as follows. Catalyzes the irreversible NADPH-dependent deamination of GMP to IMP. It functions in the conversion of nucleobase, nucleoside and nucleotide derivatives of G to A nucleotides, and in maintaining the intracellular balance of A and G nucleotides. The chain is GMP reductase from Vibrio cholerae serotype O1 (strain ATCC 39541 / Classical Ogawa 395 / O395).